The sequence spans 173 residues: Propanediol dehydratase small subunit (173 aa).

It belongs to the diol/glycerol dehydratase small subunit family. In terms of assembly, the propanediol dehydratase enzyme is a heterotrimeric complex composed of a large (PduC), a medium (PduD) and a small (PduE) subunit. The cofactor is adenosylcob(III)alamin.

It is found in the bacterial microcompartment. It catalyses the reaction propane-1,2-diol = propanal + H2O. It participates in polyol metabolism; 1,2-propanediol degradation. With respect to regulation, inhibited by glycerol. In terms of biological role, part of the PduCDE complex that catalyzes the dehydration of 1,2-propanediol (1,2-PD) to propionaldehyde. Required for S.typhimurium growth on 1,2-PD as the sole carbon and energy source. Localized in the bacterial microcompartment (BMC) dedicated to 1,2-PD degradation. Functionally, the 1,2-PD-specific bacterial microcompartment (BMC) concentrates low levels of 1,2-PD catabolic enzymes, concentrates volatile reaction intermediates thus enhancing pathway flux and keeps the level of toxic, mutagenic propionaldehyde low. The protein is Propanediol dehydratase small subunit of Salmonella typhimurium (strain LT2 / SGSC1412 / ATCC 700720).